A 287-amino-acid polypeptide reads, in one-letter code: Pyridoxal kinase PdxY (287 aa).

Substrate is bound by residues Ser-9 and 44–45 (MQ). ATP-binding residues include Asp-111, Ala-142, Glu-147, and Lys-180. Asp-221 is a binding site for substrate.

This sequence belongs to the pyridoxine kinase family. PdxY subfamily. In terms of assembly, homodimer. Mg(2+) serves as cofactor.

The catalysed reaction is pyridoxal + ATP = pyridoxal 5'-phosphate + ADP + H(+). It functions in the pathway cofactor metabolism; pyridoxal 5'-phosphate salvage; pyridoxal 5'-phosphate from pyridoxal: step 1/1. Pyridoxal kinase involved in the salvage pathway of pyridoxal 5'-phosphate (PLP). Catalyzes the phosphorylation of pyridoxal to PLP. This is Pyridoxal kinase PdxY from Burkholderia mallei (strain ATCC 23344).